The primary structure comprises 352 residues: Galactokinase (352 aa).

17–20 is a binding site for substrate; sequence EHTD. Residues Ser49 and 101-107 each bind ATP; that span reads GAGLSSS. Residues Ser107 and Glu139 each coordinate Mg(2+). Residue Asp151 is the Proton acceptor of the active site. Residue Tyr200 coordinates substrate.

Belongs to the GHMP kinase family. GalK subfamily. In terms of assembly, monomer.

The protein resides in the cytoplasm. The enzyme catalyses alpha-D-galactose + ATP = alpha-D-galactose 1-phosphate + ADP + H(+). Its pathway is carbohydrate metabolism; galactose metabolism. In terms of biological role, catalyzes the transfer of the gamma-phosphate of ATP to D-galactose to form alpha-D-galactose-1-phosphate (Gal-1-P). Is very specific for its substrate, since it is not able to use D-glucose, D-fructose, D-mannose, 2-deoxy-D-glucose, and D-glucosamine as substrates. This is Galactokinase from Pyrococcus furiosus (strain ATCC 43587 / DSM 3638 / JCM 8422 / Vc1).